We begin with the raw amino-acid sequence, 283 residues long: Pre-mRNA-splicing factor CWC23 (283 aa).

The J domain occupies 15–87 (NLYDVLELPT…DVRPHYDRWL (73 aa)).

This sequence belongs to the DnaJ family. Belongs to the CWC complex (or CEF1-associated complex), a spliceosome sub-complex reminiscent of a late-stage spliceosome composed of the U2, U5 and U6 snRNAs and at least BUD13, BUD31, BRR2, CDC40, CEF1, CLF1, CUS1, CWC2, CWC15, CWC21, CWC22, CWC23, CWC24, CWC25, CWC27, ECM2, HSH155, IST3, ISY1, LEA1, MSL1, NTC20, PRP8, PRP9, PRP11, PRP19, PRP21, PRP22, PRP45, PRP46, SLU7, SMB1, SMD1, SMD2, SMD3, SMX2, SMX3, SNT309, SNU114, SPP2, SYF1, SYF2, RSE1 and YJU2.

The protein resides in the cytoplasm. It localises to the nucleus. In terms of biological role, involved in pre-mRNA splicing. May be involved in endoplasmic reticulum-associated protein degradation (ERAD) and required for growth at low and high temperatures. The polypeptide is Pre-mRNA-splicing factor CWC23 (CWC23) (Saccharomyces cerevisiae (strain ATCC 204508 / S288c) (Baker's yeast)).